Here is a 216-residue protein sequence, read N- to C-terminus: Histone doublet H4-H3 (216 aa).

The span at 1-12 shows a compositional bias: basic residues; the sequence is MSKAGKKVKAQQ. Residues 1-23 form a disordered region; the sequence is MSKAGKKVKAQQHGHLADHVSVG.

Its subcellular location is the host nucleus. It localises to the host cytoplasm. The protein localises to the virion. Its function is as follows. Histone-like protein that is recruited to viral factories during viral replication and participates in viral DNA packaging and virion production probably by forming unstable nucleosome-like particles. May compact the viral DNA. In Melbournevirus (MelV), this protein is Histone doublet H4-H3.